The primary structure comprises 90 residues: [Phe8]-phyllolitorin (90 aa).

A signal peptide spans 1–30 (MSAVPFTRVLLISGFLAHLLLSTFVTLTVC). A propeptide spanning residues 31–48 (KEVTEESDDLSKRNVLQR) is cleaved from the precursor. A Pyrrolidone carboxylic acid modification is found at Gln49. Residue Met57 is modified to Methionine amide. A propeptide spanning residues 61–90 (SLENTNRRSDEDMEISALFRGSPLKVKRSD) is cleaved from the precursor.

The protein belongs to the bombesin/neuromedin-B/ranatensin family. In terms of tissue distribution, expressed by the skin glands.

It localises to the secreted. This chain is [Phe8]-phyllolitorin, found in Phyllomedusa sauvagei (Sauvage's leaf frog).